The following is a 261-amino-acid chain: 2-phytyl-1,4-beta-naphthoquinone methyltransferase, chloroplastic (261 aa).

Residues 1 to 30 (MAALLGIVSPVTFTGKHPVNSRSRRRTVVK) constitute a chloroplast transit peptide.

It belongs to the class I-like SAM-binding methyltransferase superfamily. MenG/UbiE family.

The protein localises to the plastid. It localises to the chloroplast. It catalyses the reaction demethylphylloquinol + S-adenosyl-L-methionine = phylloquinol + S-adenosyl-L-homocysteine + H(+). Involved in the biosynthesis of phylloquinone (vitamin K1). Methyltransferase required for the conversion of 2-phytyl-1,4-beta-naphthoquinol to phylloquinol. The protein is 2-phytyl-1,4-beta-naphthoquinone methyltransferase, chloroplastic of Arabidopsis thaliana (Mouse-ear cress).